The chain runs to 381 residues: tRNA-specific 2-thiouridylase MnmA (381 aa).

ATP contacts are provided by residues 14-21 and methionine 40; that span reads AMSGGVDS. The active-site Nucleophile is cysteine 108. Cysteine 108 and cysteine 205 are oxidised to a cystine. Residue glycine 132 coordinates ATP. An interaction with tRNA region spans residues 155–157; that stretch reads KDQ. Cysteine 205 functions as the Cysteine persulfide intermediate in the catalytic mechanism. Positions 309–310 are interaction with tRNA; sequence RY.

Belongs to the MnmA/TRMU family.

The protein resides in the cytoplasm. The catalysed reaction is S-sulfanyl-L-cysteinyl-[protein] + uridine(34) in tRNA + AH2 + ATP = 2-thiouridine(34) in tRNA + L-cysteinyl-[protein] + A + AMP + diphosphate + H(+). Functionally, catalyzes the 2-thiolation of uridine at the wobble position (U34) of tRNA, leading to the formation of s(2)U34. This Deinococcus geothermalis (strain DSM 11300 / CIP 105573 / AG-3a) protein is tRNA-specific 2-thiouridylase MnmA.